The sequence spans 239 residues: Aspartate/glutamate leucyltransferase (239 aa).

It belongs to the R-transferase family. Bpt subfamily.

It is found in the cytoplasm. It carries out the reaction N-terminal L-glutamyl-[protein] + L-leucyl-tRNA(Leu) = N-terminal L-leucyl-L-glutamyl-[protein] + tRNA(Leu) + H(+). It catalyses the reaction N-terminal L-aspartyl-[protein] + L-leucyl-tRNA(Leu) = N-terminal L-leucyl-L-aspartyl-[protein] + tRNA(Leu) + H(+). In terms of biological role, functions in the N-end rule pathway of protein degradation where it conjugates Leu from its aminoacyl-tRNA to the N-termini of proteins containing an N-terminal aspartate or glutamate. The chain is Aspartate/glutamate leucyltransferase from Campylobacter jejuni subsp. jejuni serotype O:2 (strain ATCC 700819 / NCTC 11168).